Here is a 193-residue protein sequence, read N- to C-terminus: Dual-action ribosomal maturation protein DarP (193 aa).

Positions 1–10 (MRGRDEDTGE) are enriched in basic and acidic residues. Disordered stretches follow at residues 1-20 (MRGR…SQQR) and 171-193 (QEQG…EDDE). Residues 181–193 (GLEDGESALEDDE) are compositionally biased toward acidic residues.

It belongs to the DarP family.

Its subcellular location is the cytoplasm. In terms of biological role, member of a network of 50S ribosomal subunit biogenesis factors which assembles along the 30S-50S interface, preventing incorrect 23S rRNA structures from forming. Promotes peptidyl transferase center (PTC) maturation. The protein is Dual-action ribosomal maturation protein DarP of Xanthomonas oryzae pv. oryzae (strain KACC10331 / KXO85).